The sequence spans 359 residues: Glycerol-3-phosphate dehydrogenase [NAD(P)+] (359 aa).

The NADPH site is built by T11, W12, R32, and K107. 2 residues coordinate sn-glycerol 3-phosphate: K107 and G138. A142 contributes to the NADPH binding site. K193, D246, S256, R257, and N258 together coordinate sn-glycerol 3-phosphate. Residue K193 is the Proton acceptor of the active site. R257 serves as a coordination point for NADPH. NADPH-binding residues include V281 and E283.

The protein belongs to the NAD-dependent glycerol-3-phosphate dehydrogenase family.

The protein localises to the cytoplasm. The catalysed reaction is sn-glycerol 3-phosphate + NAD(+) = dihydroxyacetone phosphate + NADH + H(+). It carries out the reaction sn-glycerol 3-phosphate + NADP(+) = dihydroxyacetone phosphate + NADPH + H(+). Its pathway is membrane lipid metabolism; glycerophospholipid metabolism. Its function is as follows. Catalyzes the reduction of the glycolytic intermediate dihydroxyacetone phosphate (DHAP) to sn-glycerol 3-phosphate (G3P), the key precursor for phospholipid synthesis. This is Glycerol-3-phosphate dehydrogenase [NAD(P)+] from Dehalococcoides mccartyi (strain ATCC BAA-2100 / JCM 16839 / KCTC 5957 / BAV1).